A 237-amino-acid polypeptide reads, in one-letter code: Nitrogen fixation regulation protein FixK (237 aa).

Residues 156-229 (RSADEKVAAF…HGGISLLDPA (74 aa)) enclose the HTH crp-type domain. Positions 189–208 (RQDIADYLGLTIETVSRTFT) form a DNA-binding region, H-T-H motif.

B.japonicum has two FixLJ-dependent FixK homologs that are activators of the transcription of a group of genes involved in anaerobic processes such as denitrification and possibly nitrogen fixation. FixK may bind DNA at the FNR consensus binding site. This is Nitrogen fixation regulation protein FixK (fixK) from Bradyrhizobium diazoefficiens (strain JCM 10833 / BCRC 13528 / IAM 13628 / NBRC 14792 / USDA 110).